The primary structure comprises 138 residues: Nucleoside diphosphate kinase (138 aa).

ATP is bound by residues Lys-9, Phe-57, Arg-85, Thr-91, Arg-102, and Asn-112. The Pros-phosphohistidine intermediate role is filled by His-120.

Belongs to the NDK family. Homotetramer. Mg(2+) is required as a cofactor.

It localises to the cytoplasm. It catalyses the reaction a 2'-deoxyribonucleoside 5'-diphosphate + ATP = a 2'-deoxyribonucleoside 5'-triphosphate + ADP. The catalysed reaction is a ribonucleoside 5'-diphosphate + ATP = a ribonucleoside 5'-triphosphate + ADP. Major role in the synthesis of nucleoside triphosphates other than ATP. The ATP gamma phosphate is transferred to the NDP beta phosphate via a ping-pong mechanism, using a phosphorylated active-site intermediate. This is Nucleoside diphosphate kinase from Streptococcus agalactiae serotype III (strain NEM316).